A 124-amino-acid polypeptide reads, in one-letter code: Small ribosomal subunit protein bS16 (124 aa).

A disordered region spans residues 88 to 124 (VPEQTKQAQPKAKAQERLREAEEKARAAAEAAASAEG). A compositionally biased stretch (basic and acidic residues) spans 100 to 114 (KAQERLREAEEKARA). Residues 115 to 124 (AAEAAASAEG) are compositionally biased toward low complexity.

Belongs to the bacterial ribosomal protein bS16 family.

The chain is Small ribosomal subunit protein bS16 from Rhodospirillum rubrum (strain ATCC 11170 / ATH 1.1.1 / DSM 467 / LMG 4362 / NCIMB 8255 / S1).